A 236-amino-acid chain; its full sequence is Small ribosomal subunit protein uS2c (236 aa).

Belongs to the universal ribosomal protein uS2 family.

Its subcellular location is the plastid. The protein localises to the chloroplast. This chain is Small ribosomal subunit protein uS2c (rps2), found in Ceratophyllum demersum (Rigid hornwort).